The following is a 565-amino-acid chain: Oxygen-dependent choline dehydrogenase (565 aa).

Position 7-36 (7-36) interacts with FAD; the sequence is DYIICGAGSAGNVLATRLTEDPDVTVLLLE. Residue His-474 is the Proton acceptor of the active site.

This sequence belongs to the GMC oxidoreductase family. FAD serves as cofactor.

The enzyme catalyses choline + A = betaine aldehyde + AH2. It carries out the reaction betaine aldehyde + NAD(+) + H2O = glycine betaine + NADH + 2 H(+). Its pathway is amine and polyamine biosynthesis; betaine biosynthesis via choline pathway; betaine aldehyde from choline (cytochrome c reductase route): step 1/1. Involved in the biosynthesis of the osmoprotectant glycine betaine. Catalyzes the oxidation of choline to betaine aldehyde and betaine aldehyde to glycine betaine at the same rate. The chain is Oxygen-dependent choline dehydrogenase from Burkholderia thailandensis (strain ATCC 700388 / DSM 13276 / CCUG 48851 / CIP 106301 / E264).